Consider the following 272-residue polypeptide: Phosphate import ATP-binding protein PstB (272 aa).

The ABC transporter domain maps to 26 to 267 (LEIRNLDLRY…PKKRKTEDYI (242 aa)). 58 to 65 (GPSGCGKS) provides a ligand contact to ATP.

This sequence belongs to the ABC transporter superfamily. Phosphate importer (TC 3.A.1.7) family. The complex is composed of two ATP-binding proteins (PstB), two transmembrane proteins (PstC and PstA) and a solute-binding protein (PstS).

The protein resides in the cell inner membrane. It catalyses the reaction phosphate(out) + ATP + H2O = ADP + 2 phosphate(in) + H(+). Its function is as follows. Part of the ABC transporter complex PstSACB involved in phosphate import. Responsible for energy coupling to the transport system. This Shewanella frigidimarina (strain NCIMB 400) protein is Phosphate import ATP-binding protein PstB.